The following is a 210-amino-acid chain: Large ribosomal subunit protein uL4 (210 aa).

The interval 46–77 is disordered; it reads QGTHKSKERGEIAGSTKKIKKQKGTGTARAGS.

The protein belongs to the universal ribosomal protein uL4 family. As to quaternary structure, part of the 50S ribosomal subunit.

In terms of biological role, one of the primary rRNA binding proteins, this protein initially binds near the 5'-end of the 23S rRNA. It is important during the early stages of 50S assembly. It makes multiple contacts with different domains of the 23S rRNA in the assembled 50S subunit and ribosome. Its function is as follows. Forms part of the polypeptide exit tunnel. In Amoebophilus asiaticus (strain 5a2), this protein is Large ribosomal subunit protein uL4.